The following is a 181-amino-acid chain: Adenylyl-sulfate kinase (181 aa).

Residue 12 to 19 (GLSGAGKT) participates in ATP binding. S86 functions as the Phosphoserine intermediate in the catalytic mechanism.

The protein belongs to the APS kinase family.

The catalysed reaction is adenosine 5'-phosphosulfate + ATP = 3'-phosphoadenylyl sulfate + ADP + H(+). It participates in sulfur metabolism; hydrogen sulfide biosynthesis; sulfite from sulfate: step 2/3. Its function is as follows. Catalyzes the synthesis of activated sulfate. The sequence is that of Adenylyl-sulfate kinase from Rippkaea orientalis (strain PCC 8801 / RF-1) (Cyanothece sp. (strain PCC 8801)).